The sequence spans 237 residues: Ribosomal RNA small subunit methyltransferase G (237 aa).

S-adenosyl-L-methionine-binding positions include Gly-78, Phe-83, 129–130, and Arg-148; that span reads AE.

Belongs to the methyltransferase superfamily. RNA methyltransferase RsmG family.

Its subcellular location is the cytoplasm. Specifically methylates the N7 position of a guanine in 16S rRNA. The polypeptide is Ribosomal RNA small subunit methyltransferase G (Streptococcus equi subsp. zooepidemicus (strain H70)).